We begin with the raw amino-acid sequence, 398 residues long: G2/mitotic-specific cyclin-B2 (398 aa).

Phosphothreonine is present on T8. A phosphoserine mark is found at S11, S77, and S92. The residue at position 94 (T94) is a Phosphothreonine. Residues S99, S392, and S398 each carry the phosphoserine modification.

The protein belongs to the cyclin family. Cyclin AB subfamily. As to quaternary structure, interacts with the CDK1 protein kinase to form a serine/threonine kinase holoenzyme complex also known as maturation promoting factor (MPF). The cyclin subunit imparts substrate specificity to the complex.

Essential for the control of the cell cycle at the G2/M (mitosis) transition. This chain is G2/mitotic-specific cyclin-B2 (CCNB2), found in Macaca fascicularis (Crab-eating macaque).